The chain runs to 329 residues: Holliday junction branch migration complex subunit RuvB (329 aa).

A large ATPase domain (RuvB-L) region spans residues Met-1–Tyr-180. ATP-binding positions include Ile-19, Arg-20, Gly-61, Lys-64, Thr-65, Thr-66, Glu-127–Phe-129, Arg-170, Tyr-180, and Arg-217. A Mg(2+)-binding site is contributed by Thr-65. Residues Ser-181–Gly-252 are small ATPAse domain (RuvB-S). Positions Lys-255–Ile-329 are head domain (RuvB-H). 2 residues coordinate DNA: Arg-308 and Arg-313.

It belongs to the RuvB family. As to quaternary structure, homohexamer. Forms an RuvA(8)-RuvB(12)-Holliday junction (HJ) complex. HJ DNA is sandwiched between 2 RuvA tetramers; dsDNA enters through RuvA and exits via RuvB. An RuvB hexamer assembles on each DNA strand where it exits the tetramer. Each RuvB hexamer is contacted by two RuvA subunits (via domain III) on 2 adjacent RuvB subunits; this complex drives branch migration. In the full resolvosome a probable DNA-RuvA(4)-RuvB(12)-RuvC(2) complex forms which resolves the HJ.

It localises to the cytoplasm. The catalysed reaction is ATP + H2O = ADP + phosphate + H(+). In terms of biological role, the RuvA-RuvB-RuvC complex processes Holliday junction (HJ) DNA during genetic recombination and DNA repair, while the RuvA-RuvB complex plays an important role in the rescue of blocked DNA replication forks via replication fork reversal (RFR). RuvA specifically binds to HJ cruciform DNA, conferring on it an open structure. The RuvB hexamer acts as an ATP-dependent pump, pulling dsDNA into and through the RuvAB complex. RuvB forms 2 homohexamers on either side of HJ DNA bound by 1 or 2 RuvA tetramers; 4 subunits per hexamer contact DNA at a time. Coordinated motions by a converter formed by DNA-disengaged RuvB subunits stimulates ATP hydrolysis and nucleotide exchange. Immobilization of the converter enables RuvB to convert the ATP-contained energy into a lever motion, pulling 2 nucleotides of DNA out of the RuvA tetramer per ATP hydrolyzed, thus driving DNA branch migration. The RuvB motors rotate together with the DNA substrate, which together with the progressing nucleotide cycle form the mechanistic basis for DNA recombination by continuous HJ branch migration. Branch migration allows RuvC to scan DNA until it finds its consensus sequence, where it cleaves and resolves cruciform DNA. This Ehrlichia canis (strain Jake) protein is Holliday junction branch migration complex subunit RuvB.